Consider the following 1708-residue polypeptide: Rapamycin-insensitive companion of mTOR (1708 aa).

Positions 1 to 789 are interaction with NBN; the sequence is MAAIGRGRSL…DKANLHALIQ (789 aa). Residues Ser21, Ser35, and Ser265 each carry the phosphoserine modification. A Glycyl lysine isopeptide (Lys-Gly) (interchain with G-Cter in ubiquitin) cross-link involves residue Lys274. Residues 521–570 are ribosome-binding domain; that stretch reads LKDTEEALLINLRDSQVLQHKENLDWDWNLIGTILKWPNVNLRNYKDEQL. ATP contacts are provided by Asn543, Arg572, and Arg576. Residues 1021-1043 show a composition bias toward low complexity; that stretch reads TLSLNSESTSSRHNSESESAPSS. Positions 1021-1045 are disordered; the sequence is TLSLNSESTSSRHNSESESAPSSMF. Residues Lys1092 and Lys1095 each carry the N6-acetyllysine modification. Disordered stretches follow at residues 1101-1198 and 1218-1247; these read SLTL…ENTS and SFNT…PTAM. The residue at position 1103 (Thr1103) is a Phosphothreonine. N6-acetyllysine occurs at positions 1116, 1119, and 1125. Thr1135 carries the post-translational modification Phosphothreonine; by RPS6KB1. The residue at position 1138 (Ser1138) is a Phosphoserine. Positions 1147 to 1158 are enriched in polar residues; it reads FTSSSAQKSLQL. Phosphoserine occurs at positions 1161, 1218, and 1234. Residues 1221–1239 are compositionally biased toward low complexity; that stretch reads TDTTTSGISSMSSSPSRET. Phosphothreonine is present on Thr1270. Phosphoserine occurs at positions 1273, 1277, 1281, and 1283. Thr1294 is modified (phosphothreonine). Residues Ser1301 and Ser1312 each carry the phosphoserine modification. Thr1331 carries the phosphothreonine modification. Phosphoserine is present on residues Ser1345 and Ser1352. Residue Thr1375 is modified to Phosphothreonine. A Phosphoserine modification is found at Ser1384. Tyr1385 is modified (phosphotyrosine). Phosphoserine is present on residues Ser1387, Ser1395, and Ser1410. Residues His1514, Cys1519, and Cys1522 each contribute to the Zn(2+) site. Ser1570, Ser1573, Ser1576, and Ser1591 each carry phosphoserine. A Zn(2+)-binding site is contributed by Cys1651.

Belongs to the RICTOR family. As to quaternary structure, component of the mechanistic target of rapamycin complex 2 (mTORC2), consisting in two heterotretramers composed of MTOR, MLST8, RICTOR and MAPKAP1/SIN1. The mTORC2 core complex associates with PRR5/PROTOR1 and/or PRR5L/PROTOR2. Contrary to mTORC1, mTORC2 does not bind to and is not sensitive to FKBP12-rapamycin. Binds directly to MTOR and PRR5 within the TORC2 complex; interaction with MTOR is enhanced by deubiquitination of RICTOR by USP9X. Interaction with MAPKAP1 is not enhanced by RICTOR deubiquitination by USP9X. Interacts with CCDC28B. Interacts with NBN. Interacts with SIK3. Interacts with NCKAP1L. Interacts with ARMH4 (via cytoplasmic tail); this interaction bridges ARMH4 to the mTORC2 complex and inhibits the mTORC2 kinase activity. Interacts with UBXN2A. Interacts with TSPAN8. Post-translationally, phosphorylated by MTOR; when part of mTORC2. Phosphorylated at Thr-1135 by RPS6KB1 downstream of the mTORC1 complex: phosphorylation of RICTOR inhibits mTORC2 signaling by creating a binding site for 14-3-3 proteins. Phosphorylated at Ser-1234 by GSK3B in response to endoplasmic stress, inhibiting mTORC2 signaling. Ubiquitinated by the SCF(FBXW7) complex, leading to its degradation by the proteasome. Deubiquitinated by USP9X; deubiquitination stabilizes RICTOR and enhances its binding to MTOR, thus promoting mTORC2 complex assembly. In terms of processing, acetylated by EP300/p300 in response to glucose, leading to activate the mTORC2 complex. Acetylation by BLOC1S1/GCN5L1 in response to hypotoxic stress protects RICTOR against ubiquitination and subsequent degradation by the proteasome. In terms of tissue distribution, highest levels in liver and brain with expression also detected in heart, muscle, spleen and kidney (at protein level).

The protein resides in the cell membrane. It localises to the endoplasmic reticulum membrane. It is found in the lysosome membrane. In terms of biological role, component of the mechanistic target of rapamycin complex 2 (mTORC2), which transduces signals from growth factors to pathways involved in proliferation, cytoskeletal organization, lipogenesis and anabolic output. In response to growth factors, mTORC2 phosphorylates and activates AGC protein kinase family members, including AKT (AKT1, AKT2 and AKT3), PKC (PRKCA, PRKCB and PRKCE) and SGK1. In contrast to mTORC1, mTORC2 is nutrient-insensitive. Within the mTORC2 complex, RICTOR probably acts as a molecular adapter. RICTOR is responsible for the FKBP12-rapamycin-insensitivity of mTORC2. mTORC2 plays a critical role in AKT1 activation by mediating phosphorylation of different sites depending on the context, such as 'Thr-450', 'Ser-473', 'Ser-477' or 'Thr-479', facilitating the phosphorylation of the activation loop of AKT1 on 'Thr-308' by PDPK1/PDK1 which is a prerequisite for full activation. mTORC2 catalyzes the phosphorylation of SGK1 at 'Ser-422' and of PRKCA on 'Ser-657'. The mTORC2 complex also phosphorylates various proteins involved in insulin signaling, such as FBXW8 and IGF2BP1. mTORC2 acts upstream of Rho GTPases to regulate the actin cytoskeleton, probably by activating one or more Rho-type guanine nucleotide exchange factors. mTORC2 promotes the serum-induced formation of stress-fibers or F-actin. Plays an essential role in embryonic growth and development. The polypeptide is Rapamycin-insensitive companion of mTOR (Mus musculus (Mouse)).